The primary structure comprises 362 residues: Peptide chain release factor 1 (362 aa).

Glutamine 236 is subject to N5-methylglutamine.

It belongs to the prokaryotic/mitochondrial release factor family. Post-translationally, methylated by PrmC. Methylation increases the termination efficiency of RF1.

It is found in the cytoplasm. In terms of biological role, peptide chain release factor 1 directs the termination of translation in response to the peptide chain termination codons UAG and UAA. The chain is Peptide chain release factor 1 from Lactobacillus helveticus (strain DPC 4571).